The following is a 239-amino-acid chain: Adapter protein MecA (239 aa).

Positions 118-128 are enriched in basic and acidic residues; the sequence is EQRTKEKEAQG. Residues 118–137 form a disordered region; the sequence is EQRTKEKEAQGSKRQKSSAR.

This sequence belongs to the MecA family. In terms of assembly, homodimer.

Functionally, enables the recognition and targeting of unfolded and aggregated proteins to the ClpC protease or to other proteins involved in proteolysis. This chain is Adapter protein MecA, found in Staphylococcus aureus (strain bovine RF122 / ET3-1).